The primary structure comprises 472 residues: Ribulose bisphosphate carboxylase large chain 1 (472 aa).

2 residues coordinate substrate: Asn115 and Thr165. The active-site Proton acceptor is Lys167. Position 169 (Lys169) interacts with substrate. Mg(2+) contacts are provided by Lys193, Asp195, and Glu196. N6-carboxylysine is present on Lys193. His286 serves as the catalytic Proton acceptor. Arg287, His319, and Ser371 together coordinate substrate.

Belongs to the RuBisCO large chain family. Type I subfamily. Heterohexadecamer of 8 large chains and 8 small chains. Mg(2+) is required as a cofactor.

It catalyses the reaction 2 (2R)-3-phosphoglycerate + 2 H(+) = D-ribulose 1,5-bisphosphate + CO2 + H2O. The enzyme catalyses D-ribulose 1,5-bisphosphate + O2 = 2-phosphoglycolate + (2R)-3-phosphoglycerate + 2 H(+). RuBisCO catalyzes two reactions: the carboxylation of D-ribulose 1,5-bisphosphate, the primary event in carbon dioxide fixation, as well as the oxidative fragmentation of the pentose substrate. Both reactions occur simultaneously and in competition at the same active site. The protein is Ribulose bisphosphate carboxylase large chain 1 of Allochromatium vinosum (strain ATCC 17899 / DSM 180 / NBRC 103801 / NCIMB 10441 / D) (Chromatium vinosum).